A 688-amino-acid chain; its full sequence is Lectin-domain containing receptor kinase VI.3 (688 aa).

Positions 1–14 (MLVLFLLLTIPTRA) are cleaved as a signal peptide. Topologically, residues 15–306 (QRTTTETPKT…KRGYNSQVLA (292 aa)) are extracellular. The interval 22–271 (PKTEFIFRGF…AHYVMGWSFS (250 aa)) is legume-lectin like. A helical transmembrane segment spans residues 307–327 (LIVALSGVTVILLALLFFFVM). The Cytoplasmic segment spans residues 328-688 (YKKRLQQGEV…VSSSSVISGR (361 aa)). A Protein kinase domain is found at 361–640 (FKENRIVGTG…LNGDDDVPEI (280 aa)). ATP is bound by residues 367–375 (VGTGGFGTV) and Lys391. Catalysis depends on Asp490, which acts as the Proton acceptor. Residues 662–688 (VSSDRASSSVPSFSVTRVSSSSVISGR) form a disordered region.

It in the C-terminal section; belongs to the protein kinase superfamily. Ser/Thr protein kinase family. In the N-terminal section; belongs to the leguminous lectin family.

It is found in the cell membrane. It catalyses the reaction L-seryl-[protein] + ATP = O-phospho-L-seryl-[protein] + ADP + H(+). The enzyme catalyses L-threonyl-[protein] + ATP = O-phospho-L-threonyl-[protein] + ADP + H(+). Involved in negative regulation of abscisic acid response in seed germination. The protein is Lectin-domain containing receptor kinase VI.3 (LECRK63) of Arabidopsis thaliana (Mouse-ear cress).